The following is a 702-amino-acid chain: Pentatricopeptide repeat-containing protein At4g16390, chloroplastic (702 aa).

The transit peptide at 1–53 directs the protein to the chloroplast; sequence MSFHHLCSSPSSLLHDPLPLCNLLSVYPKSTPRSFLSSYNPNSSHFHSRNLLQ. PPR repeat units follow at residues 174 to 208, 209 to 243, 244 to 278, 279 to 313, 314 to 348, 349 to 383, 384 to 414, 420 to 454, and 455 to 489; these read EVIL…GIKP, DNAT…GCEP, DNVT…KWRI, DAVT…GVKP, NLVI…GFTP, NWST…GLSL, TVIL…MKNC, DSWT…GFEP, and TLFV…GITP. The 86-residue stretch at 603-688 folds into the Smr domain; it reads LHLKSLSLGA…WFLTTSVAAK (86 aa).

It belongs to the PPR family. P subfamily. As to expression, expressed in leaves and flowers and at lower levels in stems and flower buds.

It is found in the plastid. The protein resides in the chloroplast. Its function is as follows. Involved in chloroplast RNA processing. Can bind RNA. Involved in chloroplast development. Involved in chloroplast ribosomal RNA (rRNA) processing and/or translation. Required for FtsH-mediated chloroplast biogenesis. Involved in translation and accumulation of chloroplast ATP synthase subunits. The chain is Pentatricopeptide repeat-containing protein At4g16390, chloroplastic from Arabidopsis thaliana (Mouse-ear cress).